We begin with the raw amino-acid sequence, 687 residues long: Adhesion G-protein coupled receptor G1 (687 aa).

Positions 1 to 25 are cleaved as a signal peptide; the sequence is MTAQSLLQTTLFLLSLLFLVQGAHG. Heparin is bound at residue 26–33; sequence RGHREDFR. Topologically, residues 26-402 are extracellular; it reads RGHREDFRFC…VEVDAVHKHY (377 aa). Disulfide bonds link cysteine 35–cysteine 91 and cysteine 121–cysteine 177. N-linked (GlcNAc...) asparagine glycosylation is found at asparagine 39, asparagine 148, and asparagine 171. Residue 190 to 200 participates in heparin binding; sequence LKHPQKASRRP. The GAIN-B domain maps to 224–395; that stretch reads DTVSFEEDRI…AVLMVSSVEV (172 aa). Asparagine 234, asparagine 303, asparagine 324, and asparagine 341 each carry an N-linked (GlcNAc...) asparagine glycan. Intrachain disulfides connect cysteine 346–cysteine 377 and cysteine 366–cysteine 379. Positions 346 to 395 are GPS; it reads CVFWVEDPTLSSPGHWSSAGCETVRRETQTSCFCNHLTYFAVLMVSSVEV. The interval 384-397 is stachel; it reads YFAVLMVSSVEVDA. Residues 403-423 form a helical membrane-spanning segment; it reads LSLLSYVGCVVSALACIVTIA. Topologically, residues 424–442 are cytoplasmic; the sequence is AYLCSRRKPRDYTIKVHMN. A helical membrane pass occupies residues 443–463; sequence LLLAVFLLDTSFLLSEPVALT. Over 464 to 470 the chain is Extracellular; it reads GSEAGCR. Residues 471-491 traverse the membrane as a helical segment; the sequence is ASAIFLHFSLLACLSWMGLEG. Residues 492–512 lie on the Cytoplasmic side of the membrane; that stretch reads YNLYRLVVEVFGTYVPGYLLK. A helical transmembrane segment spans residues 513 to 533; it reads LSAMGWGFPIFLVTLVALVDV. The Extracellular portion of the chain corresponds to 534 to 570; the sequence is DNYGPIILAVHRTPEGVIYPSMCWIRDSLVSYITNLG. The chain crosses the membrane as a helical span at residues 571–591; that stretch reads LFSLVFLFNMAMLATMVVQIL. The Cytoplasmic portion of the chain corresponds to 592–603; the sequence is RLRPHTQKWSHV. A helical membrane pass occupies residues 604–624; it reads LTLLGLSLVLGLPWALIFFSF. Residues 625–630 are Extracellular-facing; sequence ASGTFQ. A helical membrane pass occupies residues 631–651; the sequence is LVVLYLFSIITSFQGFLIFIW. The Cytoplasmic portion of the chain corresponds to 652–687; the sequence is YWSMRLQARGGPSPLKSNSDSARLPISSGSTSSSRI. The tract at residues 664 to 687 is disordered; that stretch reads SPLKSNSDSARLPISSGSTSSSRI. A compositionally biased stretch (low complexity) spans 678–687; sequence SSGSTSSSRI.

Belongs to the G-protein coupled receptor 2 family. LN-TM7 subfamily. In terms of assembly, heterodimer of 2 chains generated by proteolytic processing; the large extracellular N-terminal fragment (ADGRG1 NT) and the membrane-bound C-terminal fragment (ADGRG1-CT) predominantly remain associated and non-covalently linked. ADGRG1 NT self-associates in a trans-trans manner; the homophilic interaction enhances receptor signaling. Interacts with TGM2. Interacts with heparin; leading to the reduction of ADGRG1 shedding. Interacts with COL3A1. Part of a GPCR-tetraspanin complex at least consisting of ADGRG1, CD81, eventually CD9, and GNA11 in which CD81 is enhancing the association of ADGRG1 with GNA11. Post-translationally, autoproteolytically cleaved into 2 fragments; the large extracellular N-terminal fragment (ADGRG1 NT) and the membrane-bound C-terminal fragment (ADGRG1 CT) predominantly remain associated and non-covalently linked. Shedding to yield the secreted ADGRG1 N-terminal fragment seems to involve metalloprotease(s). In terms of processing, ubiquitinated. Undergoes polyubiquitination upon activation.

It localises to the cell membrane. The protein resides in the secreted. Its subcellular location is the membrane raft. Forms a heterodimer of 2 chains generated by proteolytic processing that remain associated through non-covalent interactions mediated by the GAIN-B domain. In the inactivated receptor, the Stachel sequence (also named stalk) is embedded in the GAIN-B domain, where it adopts a beta-strand conformation. On activation, the Stachel moves into the 7 transmembrane region and adopts a twisted hook-shaped configuration that forms contacts within the receptor, leading to coupling of a G-alpha protein, which activates signaling. The cleaved GAIN-B and N-terminal domains can then dissociate from the rest of the receptor. Adhesion G-protein coupled receptor (aGPCR) for steroid hormone 17alpha-hydroxypregnenolone (17-OH), which is involved in cell adhesion and cell-cell interactions. Ligand binding causes a conformation change that triggers signaling via guanine nucleotide-binding proteins (G proteins) and modulates the activity of downstream effectors, such as RhoA pathway. ADGRG1 is coupled to G(12) and/or G(13) G proteins (GNA12 and GNA13, respectively) and mediates the activation Rho small GTPases. Acts as a potent suppressor of ferroptosis: binding to 17-OH-binding initiates signaling that down-regulates CD36 and alleviates ferroptosis-induced liver injury. Ligand-binding also induces cell adhesion activity via association with proteins such as collagen III/COL3A1 and TGM2. Mediates cell matrix adhesion in developing neurons and hematopoietic stem cells. Involved in cortical development, specifically in maintenance of the pial basement membrane integrity and in cortical lamination: association with COL3A1 in the developing brain inhibits neuronal migration via activation of the RhoA pathway. Together with TGM2, acts as a regulator of myelination and myelin repair in oligodendrocyte precursor cells. Acts as a hemostatic sensor of shear force: G protein-coupled receptor signaling is activated in response to shear force in platelets, promoting G(13) G protein signaling, and platelet shape change and aggregation in a COL3A1-dependent manner. Acts as an inhibitor of VEGFA production thereby inhibiting angiogenesis through a signaling pathway mediated by PRKCA. Plays a role in the maintenance of hematopoietic stem cells in bone marrow niche. Plays an essential role in testis development. The sequence is that of Adhesion G-protein coupled receptor G1 (ADGRG1) from Gorilla gorilla gorilla (Western lowland gorilla).